A 130-amino-acid chain; its full sequence is Lysozyme C, kidney isozyme (130 aa).

A C-type lysozyme domain is found at 1-130 (KVFERCELAR…LTSYIQGCGV (130 aa)). 4 disulfides stabilise this stretch: Cys-6–Cys-128, Cys-30–Cys-116, Cys-65–Cys-81, and Cys-77–Cys-95. Catalysis depends on residues Glu-35 and Asp-53.

The protein belongs to the glycosyl hydrolase 22 family. In terms of assembly, monomer.

The protein resides in the secreted. It carries out the reaction Hydrolysis of (1-&gt;4)-beta-linkages between N-acetylmuramic acid and N-acetyl-D-glucosamine residues in a peptidoglycan and between N-acetyl-D-glucosamine residues in chitodextrins.. In terms of biological role, lysozymes have primarily a bacteriolytic function; those in tissues and body fluids are associated with the monocyte-macrophage system and enhance the activity of immunoagents. The chain is Lysozyme C, kidney isozyme from Ovis aries (Sheep).